The chain runs to 968 residues: RNA polymerase-associated protein RapA (968 aa).

The region spanning 163 to 332 (EVGRRYAPRV…FARLRLLDPD (170 aa)) is the Helicase ATP-binding domain. Residue 176–183 (DEVGLGKT) participates in ATP binding. A DEAH box motif is present at residues 278-281 (DEAH). One can recognise a Helicase C-terminal domain in the interval 491–643 (RVDWLIAFLK…ELTCPSGHVL (153 aa)).

This sequence belongs to the SNF2/RAD54 helicase family. RapA subfamily. Interacts with the RNAP. Has a higher affinity for the core RNAP than for the holoenzyme. Its ATPase activity is stimulated by binding to RNAP.

Its function is as follows. Transcription regulator that activates transcription by stimulating RNA polymerase (RNAP) recycling in case of stress conditions such as supercoiled DNA or high salt concentrations. Probably acts by releasing the RNAP, when it is trapped or immobilized on tightly supercoiled DNA. Does not activate transcription on linear DNA. Probably not involved in DNA repair. This chain is RNA polymerase-associated protein RapA, found in Shewanella sp. (strain W3-18-1).